The following is a 390-amino-acid chain: 3-ketosteroid-9-alpha-monooxygenase, oxygenase component (390 aa).

Positions 32 to 134 (WHCLGLLRDF…TLERNGQLYV (103 aa)) constitute a Rieske domain. 4 residues coordinate [2Fe-2S] cluster: cysteine 73, histidine 75, cysteine 92, and histidine 95. Asparagine 181, histidine 187, histidine 192, and aspartate 311 together coordinate Fe cation.

As to quaternary structure, homotrimer. The two-component system 3-ketosteroid-9-alpha-monooxygenase is composed of an oxygenase component KshA and a reductase component KshB. [2Fe-2S] cluster is required as a cofactor. Fe cation serves as cofactor.

It catalyses the reaction androsta-1,4-diene-3,17-dione + 2 reduced [2Fe-2S]-[ferredoxin] + O2 + 2 H(+) = 9alpha-hydroxyandrosta-1,4-diene-3,17-dione + 2 oxidized [2Fe-2S]-[ferredoxin] + H2O. The protein operates within steroid metabolism; cholesterol degradation. Probably involved in the degradation of cholesterol. In vitro, catalyzes the introduction of a 9alpha-hydroxyl moiety into the ring B of 3-ketosteroid substrates such as 1,4-androstadiene-3,17-dione (ADD), 4-androstene-3,17-dione (AD), 4-androstene-17beta-ol-3-one (testosterone), 4-pregnene-3,20-dione (progesterone), 19-nor-4-androstene-3,17-dione, 1-(5alpha)-androstene-3,17-dione, 5alpha-androstane-3,17-dione, 5beta-androstane-3,17-dione, 5alpha-androstane-17beta-ol-3-one (stanolon), 11beta-hydrocortisone, 3-oxo-23,24-bisnorcholesta-4-en-22-oate (4-BNC), 23,24-bisnorcholesta-4-ene-22-oate, 3-oxo-23,24-bisnorcholesta-1,4-dien-22-oate (1,4-BNC) and 3-oxo-23,24-bisnorcholesta-1,4-dien-22-oyl-coenzyme A thioester (1,4-BNC-CoA). KshA5 has the broadest substrate range without a clear substrate preference and is active with Delta-4, Delta-1,4, 5alpha-H and 5beta-H steroids, as well as with steroids having bulky aliphatic side chains and an isopropionyl side chain at C17. The polypeptide is 3-ketosteroid-9-alpha-monooxygenase, oxygenase component (Rhodococcus rhodochrous).